The sequence spans 606 residues: Pescadillo homolog (606 aa).

In terms of domain architecture, BRCT spans 346–447 (LSTSLFSPYT…KILLEGPYGQ (102 aa)). Residues 461–497 (YEGAYDPAAGPLGPSGVEQESESEADEVSEEDEEDQG) form a disordered region. A compositionally biased stretch (acidic residues) spans 479 to 496 (QESESEADEVSEEDEEDQ).

This sequence belongs to the pescadillo family. As to quaternary structure, component of the NOP7 complex, composed of ERB1, NOP7 and YTM1. The complex is held together by ERB1, which interacts with NOP7 via its N-terminal domain and with YTM1 via a high-affinity interaction between the seven-bladed beta-propeller domains of the 2 proteins. The NOP7 complex associates with the 66S pre-ribosome.

The protein resides in the nucleus. It is found in the nucleolus. It localises to the nucleoplasm. In terms of biological role, component of the NOP7 complex, which is required for maturation of the 25S and 5.8S ribosomal RNAs and formation of the 60S ribosome. The polypeptide is Pescadillo homolog (Laccaria bicolor (strain S238N-H82 / ATCC MYA-4686) (Bicoloured deceiver)).